Here is a 372-residue protein sequence, read N- to C-terminus: Peptide chain release factor 2 (372 aa).

At glutamine 253 the chain carries N5-methylglutamine.

Belongs to the prokaryotic/mitochondrial release factor family. In terms of processing, methylated by PrmC. Methylation increases the termination efficiency of RF2.

The protein resides in the cytoplasm. Peptide chain release factor 2 directs the termination of translation in response to the peptide chain termination codons UGA and UAA. This is Peptide chain release factor 2 from Nocardia farcinica (strain IFM 10152).